The chain runs to 237 residues: MTPQAFYQVLIEHGITLTDKQKKQFETYFRLLVEWNEKINLTAITDKEEVYLKHFYDSIAPILQGYIDNSPLSILDIGAGAGFPSIPMKILYPEIDITIIDSLNKRINFLNILANELELSGVHFFHGRAEDFGQDKVFRAKFDIVTARAVARMQVLAELTIPFLKVNGRLIALKAAAAEEELISAEKALKTLFSQVTVNKNYKLPNGDDRNITIVSKKKETPNKYPRKAGTPNKKPL.

S-adenosyl-L-methionine-binding positions include G78, F83, 129-130 (AE), and R148. The segment at 216–237 (SKKKETPNKYPRKAGTPNKKPL) is disordered.

It belongs to the methyltransferase superfamily. RNA methyltransferase RsmG family.

It is found in the cytoplasm. Its function is as follows. Specifically methylates the N7 position of a guanine in 16S rRNA. This Streptococcus agalactiae serotype III (strain NEM316) protein is Ribosomal RNA small subunit methyltransferase G.